A 641-amino-acid polypeptide reads, in one-letter code: Glycerol metabolism operon regulatory protein (641 aa).

A sensor domain region spans residues 1 to 318; sequence MTTHTQDIGK…MRQLMTSQLG (318 aa). A GAF domain is found at 52 to 189; the sequence is ALLTIAQAAL…AIAREVGNSL (138 aa). The PAS domain maps to 203-265; sequence NQMYGLLESM…MLLRRAIKHA (63 aa). The region spanning 327–552 is the Sigma-54 factor interaction domain; sequence MSTDDPETRR…LNSIIENIAI (226 aa). ATP contacts are provided by residues 355 to 362 and 415 to 424; these read GEEGVGKE and ANGGTLFLEK.

Its function is as follows. Transcriptional activator of the glycerol utilization dha operon. The chain is Glycerol metabolism operon regulatory protein from Citrobacter freundii.